The sequence spans 85 residues: Conotoxin Cap15b (85 aa).

Residues 1-23 form the signal peptide; the sequence is MEKLTFLILVATVLLTIHVLVQS. Positions 24 to 49 are excised as a propeptide; that stretch reads DGDKHLKRRPKQYATKRLSALMRGHR. The residue at position 50 (Q50) is a Pyrrolidone carboxylic acid.

The protein belongs to the conotoxin O2 superfamily. In terms of processing, contains 4 disulfide bonds. Expressed by the venom duct.

The protein localises to the secreted. The protein is Conotoxin Cap15b of Conus capitaneus (Captain cone).